The sequence spans 98 residues: Large ribosomal subunit protein eL21 (98 aa).

The tract at residues 1-22 (MVQMSEGFRRKTRKKLSKHPRE) is disordered. A compositionally biased stretch (basic residues) spans 10–21 (RKTRKKLSKHPR).

It belongs to the eukaryotic ribosomal protein eL21 family.

This chain is Large ribosomal subunit protein eL21 (rpl21e), found in Methanocaldococcus jannaschii (strain ATCC 43067 / DSM 2661 / JAL-1 / JCM 10045 / NBRC 100440) (Methanococcus jannaschii).